We begin with the raw amino-acid sequence, 150 residues long: MNTNTLLLENKKAKFNYFIEEKVSCGIVLKGTEVKSIKAKKLSFNNSFASIKKEEFWLENLHVSKYKEGNIFNHDELRPRKLLIKKQELQRLKKFKEKEGYTLIPISFYLKKSIIKVEVGICKGKKLYDKREILKQKSIKKDLSREIKYK.

The protein belongs to the SmpB family.

The protein localises to the cytoplasm. Its function is as follows. Required for rescue of stalled ribosomes mediated by trans-translation. Binds to transfer-messenger RNA (tmRNA), required for stable association of tmRNA with ribosomes. tmRNA and SmpB together mimic tRNA shape, replacing the anticodon stem-loop with SmpB. tmRNA is encoded by the ssrA gene; the 2 termini fold to resemble tRNA(Ala) and it encodes a 'tag peptide', a short internal open reading frame. During trans-translation Ala-aminoacylated tmRNA acts like a tRNA, entering the A-site of stalled ribosomes, displacing the stalled mRNA. The ribosome then switches to translate the ORF on the tmRNA; the nascent peptide is terminated with the 'tag peptide' encoded by the tmRNA and targeted for degradation. The ribosome is freed to recommence translation, which seems to be the essential function of trans-translation. The sequence is that of SsrA-binding protein from Borrelia garinii subsp. bavariensis (strain ATCC BAA-2496 / DSM 23469 / PBi) (Borreliella bavariensis).